Here is a 140-residue protein sequence, read N- to C-terminus: Profilin-2 (140 aa).

At Ala-2 the chain carries N-acetylalanine.

This sequence belongs to the profilin family. In terms of assembly, occurs in many kinds of cells as a complex with monomeric actin in a 1:1 ratio. Interacts with PFN2. Interacts with ACTMAP (via N-terminus); the interaction may facilitate efficient cleavage of the acetylated N-terminus of immature actin by ACTMAP.

It localises to the cytoplasm. The protein resides in the cytoskeleton. Its function is as follows. Binds to actin and affects the structure of the cytoskeleton. At high concentrations, profilin prevents the polymerization of actin, whereas it enhances it at low concentrations. By binding to PIP2, it inhibits the formation of IP3 and DG. The polypeptide is Profilin-2 (PFN2) (Bos taurus (Bovine)).